Reading from the N-terminus, the 415-residue chain is Putative competence-damage inducible protein (415 aa).

This sequence belongs to the CinA family.

The sequence is that of Putative competence-damage inducible protein from Listeria welshimeri serovar 6b (strain ATCC 35897 / DSM 20650 / CCUG 15529 / CIP 8149 / NCTC 11857 / SLCC 5334 / V8).